Reading from the N-terminus, the 876-residue chain is Probable LRR receptor-like protein kinase At1g51890 (876 aa).

An N-terminal signal peptide occupies residues 1–19 (MRFLSFLIFVFAVLGLVQA). Topologically, residues 20 to 500 (QDQSGFISLD…TGKNSTNVVA (481 aa)) are extracellular. Asparagine 45, asparagine 90, asparagine 138, asparagine 177, asparagine 251, asparagine 259, asparagine 284, asparagine 290, asparagine 327, asparagine 335, asparagine 397, asparagine 412, and asparagine 417 each carry an N-linked (GlcNAc...) asparagine glycan. LRR repeat units follow at residues 407–430 (QIIS…SKLT), 431–453 (HLRE…FSDM), and 455–476 (NLTL…ETLQ). Asparagine 455, asparagine 460, asparagine 468, asparagine 481, and asparagine 494 each carry an N-linked (GlcNAc...) asparagine glycan. A helical membrane pass occupies residues 501 to 521 (IAASVASVFAVLVILAIVFVV). The Cytoplasmic portion of the chain corresponds to 522–872 (IRKKQRTNEA…FSPSSASDFS (351 aa)). Phosphothreonine is present on threonine 561. The 273-residue stretch at 570-842 (KNFERVLGKG…HVVMELNECL (273 aa)) folds into the Protein kinase domain. Residues 576 to 584 (LGKGGFGTV) and lysine 597 contribute to the ATP site. Tyrosine 642 carries the phosphotyrosine modification. The Proton acceptor role is filled by aspartate 694. A phosphothreonine mark is found at threonine 729 and threonine 734. Residue tyrosine 742 is modified to Phosphotyrosine.

It belongs to the protein kinase superfamily. Ser/Thr protein kinase family.

It localises to the cell membrane. It catalyses the reaction L-seryl-[protein] + ATP = O-phospho-L-seryl-[protein] + ADP + H(+). The enzyme catalyses L-threonyl-[protein] + ATP = O-phospho-L-threonyl-[protein] + ADP + H(+). The polypeptide is Probable LRR receptor-like protein kinase At1g51890 (Arabidopsis thaliana (Mouse-ear cress)).